Here is a 428-residue protein sequence, read N- to C-terminus: Putative zinc metalloprotease SAR1238 (428 aa).

His21 serves as a coordination point for Zn(2+). The active site involves Glu22. His25 is a binding site for Zn(2+). 4 consecutive transmembrane segments (helical) span residues 172-194 (FLTL…IGLA), 309-331 (GSTY…GFSF), 352-374 (IISL…LIPI), and 401-420 (TTII…LVTW). The region spanning 186 to 269 (ALVLFIGLAY…TKSVELTPKK (84 aa)) is the PDZ domain.

It belongs to the peptidase M50B family. The cofactor is Zn(2+).

It is found in the cell membrane. The chain is Putative zinc metalloprotease SAR1238 from Staphylococcus aureus (strain MRSA252).